A 566-amino-acid chain; its full sequence is Solute carrier family 2, facilitated glucose transporter member 9 (566 aa).

Positions methionine 1–arginine 31 are disordered. Topologically, residues methionine 1 to aspartate 51 are cytoplasmic. Residue serine 9 is modified to Phosphoserine. A helical transmembrane segment spans residues tryptophan 52–glycine 72. The Extracellular segment spans residues tyrosine 73 to threonine 107. N-linked (GlcNAc...) asparagine glycosylation is found at asparagine 74 and asparagine 90. A helical transmembrane segment spans residues leucine 108–valine 128. Over lysine 129–threonine 140 the chain is Cytoplasmic. Residues leucine 141–alanine 161 form a helical membrane-spanning segment. The Extracellular segment spans residues glycine 162–arginine 171. Residues phenylalanine 172 to isoleucine 192 traverse the membrane as a helical segment. Topologically, residues serine 193–serine 200 are cytoplasmic. The chain crosses the membrane as a helical span at residues leucine 201–leucine 221. Residues proline 222–tryptophan 231 are Extracellular-facing. The chain crosses the membrane as a helical span at residues proline 232–leucine 252. Topologically, residues proline 253–valine 316 are cytoplasmic. Residues valine 317–tyrosine 337 traverse the membrane as a helical segment. Residues threonine 338–tyrosine 354 lie on the Extracellular side of the membrane. A helical transmembrane segment spans residues valine 355–glutamate 375. Residues histidine 376 to proline 381 are Cytoplasmic-facing. The helical transmembrane segment at leucine 382 to threonine 402 threads the bilayer. Residues leucine 403–isoleucine 415 lie on the Extracellular side of the membrane. A helical transmembrane segment spans residues valine 416–leucine 436. Residues threonine 437–isoleucine 451 are Cytoplasmic-facing. Residues isoleucine 452–glutamine 472 traverse the membrane as a helical segment. Residues lysine 473–tyrosine 478 are Extracellular-facing. Residues cysteine 479–proline 499 form a helical membrane-spanning segment. Residues glutamate 500–threonine 566 are Cytoplasmic-facing. Serine 514 carries the post-translational modification Phosphoserine. A compositionally biased stretch (basic and acidic residues) spans glutamate 524–proline 539. Residues glutamate 524 to serine 543 form a disordered region.

The protein belongs to the major facilitator superfamily. Sugar transporter (TC 2.A.1.1) family.

Its subcellular location is the basolateral cell membrane. It localises to the apical cell membrane. It carries out the reaction urate(out) = urate(in). High-capacity urate transporter, which may play a role in the urate reabsorption by proximal tubules. May have a residual high-affinity, low-capacity glucose and fructose transporter activity. Transports urate at rates 45- to 60-fold faster than glucose. Does not transport galactose. May mediate small uptake of adenine but not of other nucleobases. The chain is Solute carrier family 2, facilitated glucose transporter member 9 from Pongo abelii (Sumatran orangutan).